We begin with the raw amino-acid sequence, 262 residues long: Hydroxyethylthiazole kinase (262 aa).

Methionine 50 contributes to the substrate binding site. Positions 125 and 171 each coordinate ATP. Glycine 198 is a substrate binding site.

This sequence belongs to the Thz kinase family. Requires Mg(2+) as cofactor.

It carries out the reaction 5-(2-hydroxyethyl)-4-methylthiazole + ATP = 4-methyl-5-(2-phosphooxyethyl)-thiazole + ADP + H(+). It participates in cofactor biosynthesis; thiamine diphosphate biosynthesis; 4-methyl-5-(2-phosphoethyl)-thiazole from 5-(2-hydroxyethyl)-4-methylthiazole: step 1/1. Catalyzes the phosphorylation of the hydroxyl group of 4-methyl-5-beta-hydroxyethylthiazole (THZ). The protein is Hydroxyethylthiazole kinase of Escherichia coli O139:H28 (strain E24377A / ETEC).